The sequence spans 429 residues: Enolase (429 aa).

Gln163 is a (2R)-2-phosphoglycerate binding site. The Proton donor role is filled by Glu205. Residues Asp242, Glu287, and Asp314 each contribute to the Mg(2+) site. The (2R)-2-phosphoglycerate site is built by Lys339, Arg368, Ser369, and Lys390. Lys339 acts as the Proton acceptor in catalysis.

This sequence belongs to the enolase family. Mg(2+) serves as cofactor.

It localises to the cytoplasm. The protein localises to the secreted. The protein resides in the cell surface. The catalysed reaction is (2R)-2-phosphoglycerate = phosphoenolpyruvate + H2O. It participates in carbohydrate degradation; glycolysis; pyruvate from D-glyceraldehyde 3-phosphate: step 4/5. Catalyzes the reversible conversion of 2-phosphoglycerate (2-PG) into phosphoenolpyruvate (PEP). It is essential for the degradation of carbohydrates via glycolysis. This Anaeromyxobacter dehalogenans (strain 2CP-C) protein is Enolase.